A 438-amino-acid chain; its full sequence is RING finger protein 150 (438 aa).

A signal peptide spans 1-34 (MAMSLIQACCSLALSTWLLSFCFVHLLCLDFTVA). The Extracellular portion of the chain corresponds to 35 to 208 (EKEEWYTAFV…NLQKYVSRTS (174 aa)). 4 N-linked (GlcNAc...) asparagine glycosylation sites follow: Asn-45, Asn-125, Asn-153, and Asn-186. The region spanning 81–183 (SPKQDARGEV…PKGKEIVSLL (103 aa)) is the PA domain. Residues 209 to 229 (VVFVSISFIVLMIISLAWLVF) form a helical membrane-spanning segment. Over 230–438 (YYIQRFRYAN…TDQDCEEVKS (209 aa)) the chain is Cytoplasmic. The RING-type; atypical zinc-finger motif lies at 278–319 (CAVCIEGYKPNDVVRILPCRHLFHKSCVDPWLLDHRTCPMCK).

The protein resides in the membrane. The protein is RING finger protein 150 (RNF150) of Homo sapiens (Human).